The chain runs to 991 residues: Antigenic heat-stable 120 kDa protein (991 aa).

3 disordered regions span residues 1–37, 54–73, and 348–384; these read DTSEFDPLANKEYTEEQKQTEEQEQKEFLSHTTTPAL, TPSMSALSGNISPDSQTSDP, and GQSKEQPLITPQQTTSSSVEPPQYKQQVPPITPTNQP. The span at 12-29 shows a compositional bias: basic and acidic residues; sequence EYTEEQKQTEEQEQKEFL. The segment covering 348–373 has biased composition (polar residues); that stretch reads GQSKEQPLITPQQTTSSSVEPPQYKQ.

The protein resides in the cytoplasm. The polypeptide is Antigenic heat-stable 120 kDa protein (sca4) (Rickettsia sibirica).